Consider the following 526-residue polypeptide: Bifunctional purine biosynthesis protein PurH (526 aa).

Residues 1–145 form the MGS-like domain; it reads MIRTALLSVS…KNHQDVTVLI (145 aa).

It belongs to the PurH family.

The enzyme catalyses (6R)-10-formyltetrahydrofolate + 5-amino-1-(5-phospho-beta-D-ribosyl)imidazole-4-carboxamide = 5-formamido-1-(5-phospho-D-ribosyl)imidazole-4-carboxamide + (6S)-5,6,7,8-tetrahydrofolate. The catalysed reaction is IMP + H2O = 5-formamido-1-(5-phospho-D-ribosyl)imidazole-4-carboxamide. It participates in purine metabolism; IMP biosynthesis via de novo pathway; 5-formamido-1-(5-phospho-D-ribosyl)imidazole-4-carboxamide from 5-amino-1-(5-phospho-D-ribosyl)imidazole-4-carboxamide (10-formyl THF route): step 1/1. The protein operates within purine metabolism; IMP biosynthesis via de novo pathway; IMP from 5-formamido-1-(5-phospho-D-ribosyl)imidazole-4-carboxamide: step 1/1. The chain is Bifunctional purine biosynthesis protein PurH from Polynucleobacter asymbioticus (strain DSM 18221 / CIP 109841 / QLW-P1DMWA-1) (Polynucleobacter necessarius subsp. asymbioticus).